The chain runs to 56 residues: Large ribosomal subunit protein bL33 (56 aa).

The protein belongs to the bacterial ribosomal protein bL33 family.

The chain is Large ribosomal subunit protein bL33 from Aliarcobacter butzleri (strain RM4018) (Arcobacter butzleri).